The primary structure comprises 361 residues: Chorismate synthase (361 aa).

Positions 48 and 54 each coordinate NADP(+). FMN is bound by residues 125-127 (RSS), 238-239 (NA), Gly-278, 293-297 (KPTSS), and Arg-319.

It belongs to the chorismate synthase family. In terms of assembly, homotetramer. FMNH2 serves as cofactor.

The enzyme catalyses 5-O-(1-carboxyvinyl)-3-phosphoshikimate = chorismate + phosphate. Its pathway is metabolic intermediate biosynthesis; chorismate biosynthesis; chorismate from D-erythrose 4-phosphate and phosphoenolpyruvate: step 7/7. Functionally, catalyzes the anti-1,4-elimination of the C-3 phosphate and the C-6 proR hydrogen from 5-enolpyruvylshikimate-3-phosphate (EPSP) to yield chorismate, which is the branch point compound that serves as the starting substrate for the three terminal pathways of aromatic amino acid biosynthesis. This reaction introduces a second double bond into the aromatic ring system. The sequence is that of Chorismate synthase from Klebsiella pneumoniae subsp. pneumoniae (strain ATCC 700721 / MGH 78578).